The sequence spans 563 residues: (R)-mandelonitrile lyase 1 (563 aa).

A signal peptide spans 1–27; sequence MEKSTMSAILLVLHLFVLLLQYSEVHS. FAD contacts are provided by residues 63–64, 82–83, Val129, Thr133, and 137–140; these read TS, ER, and NAGV. 2 N-linked (GlcNAc...) asparagine glycosylation sites follow: Asn145 and Asn162. Val244 contributes to the FAD binding site. Position 355 (Cys355) interacts with substrate. N-linked (GlcNAc...) asparagine glycosylation occurs at Asn379. A disulfide bridge connects residues Cys426 and Cys477. Tyr484 lines the substrate pocket. Residues 485 to 486 and Gly514 contribute to the FAD site; that span reads WH. His486 serves as the catalytic Proton donor. His524 (proton acceptor) is an active-site residue. Position 525–526 (525–526) interacts with FAD; the sequence is PQ.

It belongs to the GMC oxidoreductase family. Monomer. It depends on FAD as a cofactor. Post-translationally, glycosylated. Seeds. Localized within cotyledonary parenchyma cells.

It is found in the vacuole. The protein resides in the aleurone grain. The enzyme catalyses (R)-mandelonitrile = benzaldehyde + hydrogen cyanide. Involved in cyanogenesis, the release of HCN from injured tissues. Catalyzes the stereospecific addition of HCN to a variety of aldehydes in vitro. It is a major seed constituent, and could have the additional role of a storage form for reduced nitrogen. This is (R)-mandelonitrile lyase 1 (MDL1) from Prunus serotina (Black cherry).